A 599-amino-acid polypeptide reads, in one-letter code: Elongation factor 4 (599 aa).

The tr-type G domain occupies 2–184 (KNIRNFSIIA…RLVRDIPPPQ (183 aa)). GTP contacts are provided by residues 14 to 19 (DHGKST) and 131 to 134 (NKID).

This sequence belongs to the TRAFAC class translation factor GTPase superfamily. Classic translation factor GTPase family. LepA subfamily.

The protein resides in the cell inner membrane. The enzyme catalyses GTP + H2O = GDP + phosphate + H(+). Functionally, required for accurate and efficient protein synthesis under certain stress conditions. May act as a fidelity factor of the translation reaction, by catalyzing a one-codon backward translocation of tRNAs on improperly translocated ribosomes. Back-translocation proceeds from a post-translocation (POST) complex to a pre-translocation (PRE) complex, thus giving elongation factor G a second chance to translocate the tRNAs correctly. Binds to ribosomes in a GTP-dependent manner. The protein is Elongation factor 4 of Salmonella paratyphi C (strain RKS4594).